A 148-amino-acid polypeptide reads, in one-letter code: NADPH-dependent 7-cyano-7-deazaguanine reductase (148 aa).

The active-site Thioimide intermediate is cysteine 50. Aspartate 57 serves as the catalytic Proton donor. Substrate contacts are provided by residues 72-74 (VES) and 91-92 (HE).

This sequence belongs to the GTP cyclohydrolase I family. QueF type 1 subfamily.

It localises to the cytoplasm. It catalyses the reaction 7-aminomethyl-7-carbaguanine + 2 NADP(+) = 7-cyano-7-deazaguanine + 2 NADPH + 3 H(+). Its pathway is tRNA modification; tRNA-queuosine biosynthesis. Functionally, catalyzes the NADPH-dependent reduction of 7-cyano-7-deazaguanine (preQ0) to 7-aminomethyl-7-deazaguanine (preQ1). In Helicobacter pylori (strain ATCC 700392 / 26695) (Campylobacter pylori), this protein is NADPH-dependent 7-cyano-7-deazaguanine reductase.